Reading from the N-terminus, the 1151-residue chain is ATP-dependent helicase/deoxyribonuclease subunit B (1151 aa).

A UvrD-like helicase ATP-binding domain is found at M1 to E273. Residue G8–T15 participates in ATP binding. Residues P282–D578 enclose the UvrD-like helicase C-terminal domain. The [4Fe-4S] cluster site is built by C788, C1107, C1110, and C1116.

It belongs to the helicase family. AddB/RexB type 1 subfamily. In terms of assembly, heterodimer of AddA and AddB. The cofactor is Mg(2+). Requires [4Fe-4S] cluster as cofactor.

Its function is as follows. The heterodimer acts as both an ATP-dependent DNA helicase and an ATP-dependent, dual-direction single-stranded exonuclease. Recognizes the chi site generating a DNA molecule suitable for the initiation of homologous recombination. The AddB subunit has 5' -&gt; 3' nuclease activity but not helicase activity. This chain is ATP-dependent helicase/deoxyribonuclease subunit B, found in Moorella thermoacetica (strain ATCC 39073 / JCM 9320).